The sequence spans 421 residues: Protein PHLOEM UNLOADING MODULATOR (421 aa).

A run of 7 helical transmembrane segments spans residues 30–50 (LMPV…LFYK), 60–80 (IPFL…ALCV), 124–144 (HIIG…SVVF), 158–178 (YIFT…STIL), 286–306 (AMAW…LFVA), 323–343 (CIVA…IWSA), and 397–417 (TVFA…ALTL).

The protein belongs to the sphingomyelin synthase family.

Its subcellular location is the membrane. The protein operates within sphingolipid metabolism. Functionally, catalyzes the biosynthesis of sphingolipids with very long-chain fatty acid (VLCFA). Required for the formation of plasmodesmal cytoplasmic sleeve during the transition from type I to type II plasmodesmata to modulate post-sieve elements (SE) unloading and symplastic cell-to-cell molecular trafficking at the phloem pole pericycle (PPP)-endodermis interface in roots. This chain is Protein PHLOEM UNLOADING MODULATOR, found in Arabidopsis thaliana (Mouse-ear cress).